The chain runs to 124 residues: Translation initiation factor 5A (124 aa).

The residue at position 36 (K36) is a Hypusine.

The protein belongs to the eIF-5A family.

It is found in the cytoplasm. Functionally, functions by promoting the formation of the first peptide bond. In Haloquadratum walsbyi (strain DSM 16790 / HBSQ001), this protein is Translation initiation factor 5A.